The chain runs to 51 residues: Ovomucoid (51 aa).

Residues 3–51 enclose the Kazal-like domain; the sequence is VDCSGYPKPACTLEYFPLCGSDNQTYANKCAFCNAVVEKNVTLRHLGKC. Intrachain disulfides connect C5-C35, C13-C32, and C21-C51. N-linked (GlcNAc...) asparagine glycosylation is present at N42.

It localises to the secreted. The sequence is that of Ovomucoid from Nothoprocta cinerascens (Brushland tinamou).